Consider the following 201-residue polypeptide: Adenylyl-sulfate kinase (201 aa).

35 to 42 contacts ATP; that stretch reads GLSGSGKS. The active-site Phosphoserine intermediate is the S109.

This sequence belongs to the APS kinase family.

It carries out the reaction adenosine 5'-phosphosulfate + ATP = 3'-phosphoadenylyl sulfate + ADP + H(+). It functions in the pathway sulfur metabolism; hydrogen sulfide biosynthesis; sulfite from sulfate: step 2/3. Functionally, catalyzes the synthesis of activated sulfate. The chain is Adenylyl-sulfate kinase from Salmonella arizonae (strain ATCC BAA-731 / CDC346-86 / RSK2980).